We begin with the raw amino-acid sequence, 554 residues long: MFS-type transporter tstD (554 aa).

Polar residues-rich tracts occupy residues 1 to 10 (MPEPFNSTMP) and 27 to 38 (QDSNQPPEMSAS). Residues 1-68 (MPEPFNSTMP…ESENNEPYSV (68 aa)) form a disordered region. N-linked (GlcNAc...) asparagine glycosylation occurs at N6. Residues 39-48 (SEKKHPENEN) show a composition bias toward basic and acidic residues. Residues 76-96 (LMVLAASLAGFFSPLSASIYY) form a helical membrane-spanning segment. N-linked (GlcNAc...) asparagine glycosylation is found at N107 and N114. A run of 5 helical transmembrane segments spans residues 115–135 (LTVT…ASFS), 142–162 (PGYA…ALQN), 173–193 (LQSA…SDII), 202–222 (IAFA…IGGL), and 231–251 (WIFW…FLFF). The interval 281–300 (KEKQRQQRAENEEENANRQR) is disordered. The next 3 helical transmembrane spans lie at 311–331 (VFVV…GVAF), 354–374 (IKVA…ALST), and 413–433 (IALP…WLMT). A glycan (N-linked (GlcNAc...) asparagine) is linked at N437. 3 consecutive transmembrane segments (helical) span residues 442-462 (IILL…LNVL), 473-493 (MVTA…AAMI), and 504-524 (WSYT…LLTM).

Belongs to the major facilitator superfamily.

It localises to the membrane. MFS-type transporter; part of the gene cluster that mediates the biosynthesis of the antihypercholesterolemic agents phomoidrides which are dimeric anhydrides. This Talaromyces stipitatus (strain ATCC 10500 / CBS 375.48 / QM 6759 / NRRL 1006) (Penicillium stipitatum) protein is MFS-type transporter tstD.